Reading from the N-terminus, the 169-residue chain is Lipoprotein signal peptidase (169 aa).

4 consecutive transmembrane segments (helical) span residues 10–30, 41–61, 68–88, and 94–114; these read LPWL…KAFF, VVIP…AFSF, WQRW…VVWL, and GETW…GNLY. Catalysis depends on residues Asp124 and Asp143. A helical transmembrane segment spans residues 135–155; that stretch reads YFPAFNLADSAITVGAVMLAL.

This sequence belongs to the peptidase A8 family.

Its subcellular location is the cell inner membrane. It catalyses the reaction Release of signal peptides from bacterial membrane prolipoproteins. Hydrolyzes -Xaa-Yaa-Zaa-|-(S,diacylglyceryl)Cys-, in which Xaa is hydrophobic (preferably Leu), and Yaa (Ala or Ser) and Zaa (Gly or Ala) have small, neutral side chains.. It participates in protein modification; lipoprotein biosynthesis (signal peptide cleavage). This protein specifically catalyzes the removal of signal peptides from prolipoproteins. This chain is Lipoprotein signal peptidase, found in Pseudomonas paraeruginosa (strain DSM 24068 / PA7) (Pseudomonas aeruginosa (strain PA7)).